A 152-amino-acid chain; its full sequence is Ribonuclease HI (152 aa).

Positions M1–E142 constitute an RNase H type-1 domain. 4 residues coordinate Mg(2+): D10, E48, D70, and D134.

The protein belongs to the RNase H family. As to quaternary structure, monomer. The cofactor is Mg(2+).

The protein resides in the cytoplasm. The enzyme catalyses Endonucleolytic cleavage to 5'-phosphomonoester.. In terms of biological role, endonuclease that specifically degrades the RNA of RNA-DNA hybrids. This chain is Ribonuclease HI, found in Rickettsia conorii (strain ATCC VR-613 / Malish 7).